Reading from the N-terminus, the 493-residue chain is Serine/threonine-protein kinase 3 (493 aa).

One can recognise a Protein kinase domain in the interval 26–277; that stretch reads FDVLEKLGEG…ATQLLQHPFI (252 aa). Residues 32–40 and lysine 55 contribute to the ATP site; that span reads LGEGSYGSV. Aspartate 145 (proton acceptor) is an active-site residue. At threonine 179 the chain carries Phosphothreonine; by autocatalysis. Residues 286 to 327 are a coiled coil; that stretch reads LRDLITEAMDIKAKRHEELQRELEEEDENSEEDELDSHTMVK. Disordered regions lie at residues 303-336 and 369-414; these read ELQR…AGTM and DDEE…NCNQ. Residues 308–320 are compositionally biased toward acidic residues; the sequence is LEEEDENSEEDEL. Polar residues predominate over residues 325-336; the sequence is MVKTNSESAGTM. Over residues 369–378 the composition is skewed to acidic residues; the sequence is DDEEEEEEED. Residues 398 to 410 show a composition bias toward basic and acidic residues; the sequence is YFDKQDSKNKPHD. The SARAH domain occupies 439-486; it reads FDFLKNLSFEELQMRLKALDPMMEREIEDLRQRYNAKRQPILDAMDAK. Positions 444 to 477 form a coiled coil; the sequence is NLSFEELQMRLKALDPMMEREIEDLRQRYNAKRQ.

This sequence belongs to the protein kinase superfamily. STE Ser/Thr protein kinase family. STE20 subfamily. Homodimer; mediated via the coiled-coil region. Requires Mg(2+) as cofactor.

It localises to the cytoplasm. The protein resides in the nucleus. The enzyme catalyses L-seryl-[protein] + ATP = O-phospho-L-seryl-[protein] + ADP + H(+). It carries out the reaction L-threonyl-[protein] + ATP = O-phospho-L-threonyl-[protein] + ADP + H(+). With respect to regulation, inhibited by the C-terminal non-catalytic region. Activated by caspase-cleavage. Full activation also requires homodimerization and autophosphorylation of Thr-179. Its function is as follows. Stress-activated, pro-apoptotic kinase which, following caspase-cleavage, enters the nucleus and induces chromatin condensation followed by internucleosomal DNA fragmentation. Key component of the Hippo signaling pathway which plays a pivotal role in organ size control and tumor suppression by restricting proliferation and promoting apoptosis. The core of this pathway is composed of a kinase cascade wherein stk3/mst2 and stk4/mst1, in complex with its regulatory protein sav1, phosphorylates and activates lats1/2 in complex with its regulatory protein mob1, which in turn phosphorylates and inactivates yap1 oncoprotein and wwtr1/taz. Phosphorylation of yap1 by lats2 inhibits its translocation into the nucleus to regulate cellular genes important for cell proliferation, cell death, and cell migration. The sequence is that of Serine/threonine-protein kinase 3 (stk3) from Xenopus laevis (African clawed frog).